Reading from the N-terminus, the 178-residue chain is Protein GrpE (178 aa).

The interval 1 to 22 is disordered; that stretch reads MSENQNPSPSPEEIEAAMSANA.

The protein belongs to the GrpE family. Homodimer.

The protein localises to the cytoplasm. Functionally, participates actively in the response to hyperosmotic and heat shock by preventing the aggregation of stress-denatured proteins, in association with DnaK and GrpE. It is the nucleotide exchange factor for DnaK and may function as a thermosensor. Unfolded proteins bind initially to DnaJ; upon interaction with the DnaJ-bound protein, DnaK hydrolyzes its bound ATP, resulting in the formation of a stable complex. GrpE releases ADP from DnaK; ATP binding to DnaK triggers the release of the substrate protein, thus completing the reaction cycle. Several rounds of ATP-dependent interactions between DnaJ, DnaK and GrpE are required for fully efficient folding. This Acidovorax ebreus (strain TPSY) (Diaphorobacter sp. (strain TPSY)) protein is Protein GrpE.